The chain runs to 398 residues: Argininosuccinate lyase (398 aa).

This sequence belongs to the lyase 1 family. Argininosuccinate lyase subfamily.

The protein localises to the cytoplasm. It carries out the reaction 2-(N(omega)-L-arginino)succinate = fumarate + L-arginine. It functions in the pathway amino-acid biosynthesis; L-arginine biosynthesis; L-arginine from L-ornithine and carbamoyl phosphate: step 3/3. The polypeptide is Argininosuccinate lyase (Thermotoga neapolitana (strain ATCC 49049 / DSM 4359 / NBRC 107923 / NS-E)).